The chain runs to 712 residues: Ribosomal RNA large subunit methyltransferase K/L (712 aa).

One can recognise a THUMP domain in the interval 46–157 (GAYQALLHSR…RENMVVSLDL (112 aa)).

Belongs to the methyltransferase superfamily. RlmKL family.

The protein localises to the cytoplasm. The catalysed reaction is guanosine(2445) in 23S rRNA + S-adenosyl-L-methionine = N(2)-methylguanosine(2445) in 23S rRNA + S-adenosyl-L-homocysteine + H(+). It carries out the reaction guanosine(2069) in 23S rRNA + S-adenosyl-L-methionine = N(2)-methylguanosine(2069) in 23S rRNA + S-adenosyl-L-homocysteine + H(+). Its function is as follows. Specifically methylates the guanine in position 2445 (m2G2445) and the guanine in position 2069 (m7G2069) of 23S rRNA. This chain is Ribosomal RNA large subunit methyltransferase K/L, found in Actinobacillus pleuropneumoniae serotype 7 (strain AP76).